The sequence spans 349 residues: Protein DMR6-LIKE OXYGENASE 1 (349 aa).

The region spanning 197 to 296 is the Fe2OG dioxygenase domain; that stretch reads HAQHMAFNYY…RLSIPTFYFP (100 aa). Residue tyrosine 206 participates in 2-oxoglutarate binding. Fe cation contacts are provided by histidine 221, aspartate 223, and histidine 277. 2-oxoglutarate is bound by residues arginine 287 and serine 289.

The protein belongs to the iron/ascorbate-dependent oxidoreductase family. It depends on L-ascorbate as a cofactor. Fe(2+) serves as cofactor.

The catalysed reaction is salicylate + NADH + O2 + H(+) = 2,3-dihydroxybenzoate + NAD(+) + H2O. Its function is as follows. Converts salicylic acid (SA) to both 2,3-dihydroxybenzoic acid (2,3-DHBA) and 2,5-DHBA in vitro but only 2,3-DHBA in vivo. Component of a negative feedback regulation system of SA levels during senescence. Regulates both onset and progression of leaf senescence. Negative regulator of defense against Hyaloperonospora arabidopsidis. Functionally, (Microbial infection) Confers susceptibility to the downy mildew pathogen Hyaloperonospora arabidopsidis. The sequence is that of Protein DMR6-LIKE OXYGENASE 1 from Arabidopsis thaliana (Mouse-ear cress).